The primary structure comprises 258 residues: Short-chain dehydrogenase/reductase aba4 (258 aa).

3 residues coordinate NADP(+): isoleucine 20, aspartate 66, and lysine 130. Active-site proton donor residues include serine 146 and tyrosine 160. The NADP(+) site is built by tyrosine 160, lysine 164, isoleucine 193, and threonine 195. Lysine 164 (lowers pKa of active site Tyr) is an active-site residue.

The protein belongs to the short-chain dehydrogenases/reductases (SDR) family.

It functions in the pathway hormone biosynthesis. Short-chain dehydrogenase/reductase; part of the gene cluster that mediates the biosynthesis of abscisic acid (ABA), a phytohormone that acts antagonistically toward salicylic acid (SA), jasmonic acid (JA) and ethylene (ETH) signaling, to impede plant defense responses. The first step of the pathway catalyzes the reaction from farnesyl diphosphate to alpha-ionylideneethane performed by the alpha-ionylideneethane synthase aba3 via a three-step reaction mechanism involving 2 neutral intermediates, beta-farnesene and allofarnesene. The cytochrome P450 monooxygenase aba1 might then be involved in the conversion of alpha-ionylideneethane to alpha-ionylideneacetic acid. Alpha-ionylideneacetic acid is further converted to abscisic acid in 2 steps involving the cytochrome P450 monooxygenase aba2 and the short-chain dehydrogenase/reductase aba4, via the intermediates 1'-deoxy-ABA or 1',4'-trans-diol-ABA, depending on the order of action of these 2 enzymes. Aba2 is responsible for the hydroxylation of carbon atom C-1' and aba4 might be involved in the oxidation of the C-4' carbon atom. This is Short-chain dehydrogenase/reductase aba4 from Botryotinia fuckeliana (strain B05.10) (Noble rot fungus).